Here is a 95-residue protein sequence, read N- to C-terminus: Trypomastigote decay-accelerating factor (95 aa).

Belongs to the receptors of complement activation (RCA) family.

Functionally, interferes with the efficient assembly of the host C3 convertase. Could protect parasites from complement-mediated lysis by sera from a number of different species. The sequence is that of Trypomastigote decay-accelerating factor from Trypanosoma cruzi.